Here is a 293-residue protein sequence, read N- to C-terminus: Probable porphobilinogen deaminase (293 aa).

Residue Cys233 is modified to S-(dipyrrolylmethanemethyl)cysteine.

It belongs to the HMBS family. The cofactor is dipyrromethane.

It carries out the reaction 4 porphobilinogen + H2O = hydroxymethylbilane + 4 NH4(+). Its pathway is porphyrin-containing compound metabolism; protoporphyrin-IX biosynthesis; coproporphyrinogen-III from 5-aminolevulinate: step 2/4. Functionally, tetrapolymerization of the monopyrrole PBG into the hydroxymethylbilane pre-uroporphyrinogen in several discrete steps. The chain is Probable porphobilinogen deaminase from Saccharolobus islandicus (strain Y.G.57.14 / Yellowstone #1) (Sulfolobus islandicus).